The sequence spans 465 residues: Cytochrome P450 85A2 (465 aa).

A helical membrane pass occupies residues 2–22; that stretch reads GIMMMILGLLVIIVCLCTALL. Cysteine 415 contacts heme. Residue cysteine 462 is the site of S-farnesyl cysteine attachment. The short motif at 462–465 is the Farnesylation CAAX motif element; sequence CSPY.

This sequence belongs to the cytochrome P450 family. Heme is required as a cofactor. Post-translationally, isoprenylated (farnesylated); this addition of a 15-carbon farnesyl isoprenoid to the carboxy terminus is required for endoplasmic reticulum localization and essential for the biosynthesis of brassinolide. Expressed in stems, hypocotyls, leaves, siliques, shoots, and roots, with a higher expression in apical shoots.

The protein resides in the membrane. Its subcellular location is the endoplasmic reticulum. The catalysed reaction is 6-deoxoteasterone + reduced [NADPH--hemoprotein reductase] + O2 = 6alpha-hydroxyteasterone + oxidized [NADPH--hemoprotein reductase] + H2O + H(+). It catalyses the reaction 6alpha-hydroxytyphasterol + reduced [NADPH--hemoprotein reductase] + O2 = teasterone + oxidized [NADPH--hemoprotein reductase] + 2 H2O + H(+). The enzyme catalyses 3-dehydro-6-deoxoteasterone + reduced [NADPH--hemoprotein reductase] + O2 = 3-dehydro-6alpha-hydroxyteasterone + oxidized [NADPH--hemoprotein reductase] + H2O + H(+). It carries out the reaction 3-dehydro-6alpha-hydroxyteasterone + reduced [NADPH--hemoprotein reductase] + O2 = 3-dehydroteasterone + oxidized [NADPH--hemoprotein reductase] + 2 H2O + H(+). The catalysed reaction is 6-deoxotyphasterol + reduced [NADPH--hemoprotein reductase] + O2 = 6alpha-hydroxytyphasterol + oxidized [NADPH--hemoprotein reductase] + H2O + H(+). It catalyses the reaction 6alpha-hydroxytyphasterol + reduced [NADPH--hemoprotein reductase] + O2 = typhasterol + oxidized [NADPH--hemoprotein reductase] + 2 H2O + H(+). The enzyme catalyses 6-deoxocastasterone + reduced [NADPH--hemoprotein reductase] + O2 = 6alpha-hydroxycastasterone + oxidized [NADPH--hemoprotein reductase] + H2O + H(+). It carries out the reaction 6alpha-hydroxycastasterone + reduced [NADPH--hemoprotein reductase] + O2 = castasterone + oxidized [NADPH--hemoprotein reductase] + 2 H2O + H(+). The catalysed reaction is 6-deoxo-28-norteasterone + 2 reduced [NADPH--hemoprotein reductase] + 2 O2 = 28-norteasterone + 2 oxidized [NADPH--hemoprotein reductase] + 3 H2O + 2 H(+). It catalyses the reaction 6-deoxo-28-norteasterone + reduced [NADPH--hemoprotein reductase] + O2 = 6alpha-hydroxy-28-norteasterone + oxidized [NADPH--hemoprotein reductase] + H2O + H(+). The enzyme catalyses 6alpha-hydroxy-28-norteasterone + reduced [NADPH--hemoprotein reductase] + O2 = 28-norteasterone + oxidized [NADPH--hemoprotein reductase] + 2 H2O + H(+). It carries out the reaction 6-deoxo-28-nortyphasterol + 2 reduced [NADPH--hemoprotein reductase] + 2 O2 = 28-nortyphasterol + 2 oxidized [NADPH--hemoprotein reductase] + 3 H2O + 2 H(+). The catalysed reaction is 6-deoxo-28-nortyphasterol + reduced [NADPH--hemoprotein reductase] + O2 = 6alpha-hydroxy-28-nortyphasterol + oxidized [NADPH--hemoprotein reductase] + H2O + H(+). It catalyses the reaction 6alpha-hydroxy-28-nortyphasterol + reduced [NADPH--hemoprotein reductase] + O2 = 28-nortyphasterol + oxidized [NADPH--hemoprotein reductase] + 2 H2O + H(+). The enzyme catalyses 6-deoxo-28-norcastasterone + 2 reduced [NADPH--hemoprotein reductase] + 2 O2 = 28-norcastasterone + 2 oxidized [NADPH--hemoprotein reductase] + 3 H2O + 2 H(+). It carries out the reaction 6-deoxo-28-norcastasterone + reduced [NADPH--hemoprotein reductase] + O2 = 6alpha-hydroxy-28-norcastasterone + oxidized [NADPH--hemoprotein reductase] + H2O + H(+). The catalysed reaction is 6alpha-hydroxy-28-norcastasterone + reduced [NADPH--hemoprotein reductase] + O2 = 28-norcastasterone + oxidized [NADPH--hemoprotein reductase] + 2 H2O + H(+). It catalyses the reaction 3-dehydro-6-deoxo-28-norteasterone + 2 reduced [NADPH--hemoprotein reductase] + 2 O2 = 6-dehydro-28-norteasterone + 2 oxidized [NADPH--hemoprotein reductase] + 3 H2O + 2 H(+). The enzyme catalyses 3-dehydro-6-deoxo-28-norteasterone + reduced [NADPH--hemoprotein reductase] + O2 = 3-dehydro-6alpha-hydroxy-28-norteasterone + oxidized [NADPH--hemoprotein reductase] + H2O + H(+). It carries out the reaction 3-dehydro-6alpha-hydroxy-28-norteasterone + reduced [NADPH--hemoprotein reductase] + O2 = 6-dehydro-28-norteasterone + oxidized [NADPH--hemoprotein reductase] + 2 H2O + H(+). The catalysed reaction is teasterone + reduced [NADPH--hemoprotein reductase] + O2 = 7-oxateasterone + oxidized [NADPH--hemoprotein reductase] + H2O + H(+). It catalyses the reaction castasterone + reduced [NADPH--hemoprotein reductase] + O2 = brassinolide + oxidized [NADPH--hemoprotein reductase] + H2O + H(+). The enzyme catalyses typhasterol + reduced [NADPH--hemoprotein reductase] + O2 = 7-oxatyphasterol + oxidized [NADPH--hemoprotein reductase] + H2O + H(+). It carries out the reaction 6-deoxocastasterone + 2 reduced [NADPH--hemoprotein reductase] + 2 O2 = castasterone + 2 oxidized [NADPH--hemoprotein reductase] + 3 H2O + 2 H(+). The catalysed reaction is 6-deoxoteasterone + 2 reduced [NADPH--hemoprotein reductase] + 2 O2 = teasterone + 2 oxidized [NADPH--hemoprotein reductase] + 3 H2O + 2 H(+). It catalyses the reaction 6-deoxotyphasterol + 2 reduced [NADPH--hemoprotein reductase] + 2 O2 = typhasterol + 2 oxidized [NADPH--hemoprotein reductase] + 3 H2O + 2 H(+). The enzyme catalyses 3-dehydro-6-deoxoteasterone + 2 reduced [NADPH--hemoprotein reductase] + 2 O2 = 3-dehydroteasterone + 2 oxidized [NADPH--hemoprotein reductase] + 3 H2O + 2 H(+). It functions in the pathway plant hormone biosynthesis; brassinosteroid biosynthesis. Its function is as follows. Mediates Baeyer-Villiger oxidation and catalyzes the C6-oxidation step and lactonization in brassinosteroids biosynthesis. Converts 6-deoxocastasterone (6-deoxoCS) to castasterone (CS), and castasterone to brassinolide (BL). May also convert 6-deoxoteasterone (6-deoxoTE) to teasterone (TE), 3-dehydro-6-deoxoteasterone (6-deoxo3DT, 6-deoxo-3-DHT) to 3-dehydroteasterone (3DT, 3-DHT), and 6-deoxotyphasterol (6-deoxoTY) to typhasterol (TY). Also seems to be able to convert teasterone (TE) and typhasterol (TY) to 7-oxateasterone (7-OXTE) and 7-oxatyphasterol (7-OXTY), respectively. Catalyzes the conversion of 6-deoxo-28-norteasterone (6-deoxo-28-norTE) to 28-norteasterone (28-norTE), 6-deoxo-28-nordeoxoteasterone (6-deoxo-28-nor-3-DHT) to 28-nordeoxoteasterone (28-nor-3-DHT), 6-deoxo-28-nortyphasterol (6-deoxo-28-norTY) to 28-nortyphasterol (28-norTY) and 6-deoxo-28-norcastasterone (6-deoxo-28-norCS) to 28-norcastasterone (28-norCS). Involved in a negative regulation of responses to abscisic acid (ABA) and drought tolerance. The protein is Cytochrome P450 85A2 (CYP85A2) of Arabidopsis thaliana (Mouse-ear cress).